A 940-amino-acid polypeptide reads, in one-letter code: UvrABC system protein A (940 aa).

31–38 (GLSGSGKS) contacts ATP. The C4-type zinc-finger motif lies at 253–280 (CPICGYSMRELEPRLFSFNNPAGACPTC). ABC transporter domains lie at 310–587 (WDRR…PESL) and 607–937 (ANPE…RFLK). ATP is bound at residue 640 to 647 (GVSGSGKS). The C4-type zinc finger occupies 740-766 (CEACQGDGVIKVEMHFLPDIYVPCDQC).

Belongs to the ABC transporter superfamily. UvrA family. In terms of assembly, forms a heterotetramer with UvrB during the search for lesions. Interacts with TRCF (Mfd). UvrB and TRCF binding to UvrA could be mutually exclusive.

It localises to the cytoplasm. Functionally, the UvrABC repair system catalyzes the recognition and processing of DNA lesions. UvrA is an ATPase and a DNA-binding protein. A damage recognition complex composed of 2 UvrA and 2 UvrB subunits scans DNA for abnormalities. When the presence of a lesion has been verified by UvrB, the UvrA molecules dissociate. The polypeptide is UvrABC system protein A (Escherichia coli (strain K12)).